The sequence spans 258 residues: Hydroxyacylglutathione hydrolase (258 aa).

Residues His55, His57, Asp59, His60, His115, Asp132, and His170 each coordinate Zn(2+).

Belongs to the metallo-beta-lactamase superfamily. Glyoxalase II family. As to quaternary structure, monomer. Zn(2+) serves as cofactor.

It carries out the reaction an S-(2-hydroxyacyl)glutathione + H2O = a 2-hydroxy carboxylate + glutathione + H(+). It functions in the pathway secondary metabolite metabolism; methylglyoxal degradation; (R)-lactate from methylglyoxal: step 2/2. Thiolesterase that catalyzes the hydrolysis of S-D-lactoyl-glutathione to form glutathione and D-lactic acid. This is Hydroxyacylglutathione hydrolase from Shewanella denitrificans (strain OS217 / ATCC BAA-1090 / DSM 15013).